The chain runs to 242 residues: Glucosamine-6-phosphate deaminase (242 aa).

Aspartate 67 (proton acceptor; for enolization step) is an active-site residue. The active-site For ring-opening step is asparagine 136. Histidine 138 serves as the catalytic Proton acceptor; for ring-opening step. Catalysis depends on glutamate 143, which acts as the For ring-opening step.

The protein belongs to the glucosamine/galactosamine-6-phosphate isomerase family. NagB subfamily.

It catalyses the reaction alpha-D-glucosamine 6-phosphate + H2O = beta-D-fructose 6-phosphate + NH4(+). It functions in the pathway amino-sugar metabolism; N-acetylneuraminate degradation; D-fructose 6-phosphate from N-acetylneuraminate: step 5/5. Catalyzes the reversible isomerization-deamination of glucosamine 6-phosphate (GlcN6P) to form fructose 6-phosphate (Fru6P) and ammonium ion. The protein is Glucosamine-6-phosphate deaminase of Clostridium perfringens (strain 13 / Type A).